Reading from the N-terminus, the 223-residue chain is Kinetochore protein Spc25 (223 aa).

Positions 51 to 119 (RHQRKVGKLQ…NEIMERIQTL (69 aa)) form a coiled coil.

Belongs to the SPC25 family. In terms of assembly, component of the Ndc80 complex, which is composed of Ndc80, Nuf2 and Spc25.

The protein localises to the nucleus. The protein resides in the chromosome. Its subcellular location is the centromere. It localises to the kinetochore. Acts as a component of the essential kinetochore-associated Ndc80 complex, which is required for chromosome segregation and spindle checkpoint activity during meiosis and mitosis. Required for kinetochore integrity and the organization of stable microtubule binding sites in the outer plate of the kinetochore. Participates in SAC signaling that responds specifically to disruptions in spindle microtubule dynamics. The NDC80 complex synergistically enhances the affinity of the SKA1 complex for microtubules and may allow the NDC80 complex to track depolymerizing microtubules. The polypeptide is Kinetochore protein Spc25 (Drosophila teissieri (Fruit fly)).